We begin with the raw amino-acid sequence, 132 residues long: Phosphoribosyl-AMP cyclohydrolase (132 aa).

Asp-79 lines the Mg(2+) pocket. Cys-80 is a Zn(2+) binding site. Residues Asp-81 and Asp-83 each contribute to the Mg(2+) site. Residues Cys-100 and Cys-107 each contribute to the Zn(2+) site.

Belongs to the PRA-CH family. Homodimer. It depends on Mg(2+) as a cofactor. Zn(2+) is required as a cofactor.

It localises to the cytoplasm. The enzyme catalyses 1-(5-phospho-beta-D-ribosyl)-5'-AMP + H2O = 1-(5-phospho-beta-D-ribosyl)-5-[(5-phospho-beta-D-ribosylamino)methylideneamino]imidazole-4-carboxamide. It participates in amino-acid biosynthesis; L-histidine biosynthesis; L-histidine from 5-phospho-alpha-D-ribose 1-diphosphate: step 3/9. Catalyzes the hydrolysis of the adenine ring of phosphoribosyl-AMP. This Delftia acidovorans (strain DSM 14801 / SPH-1) protein is Phosphoribosyl-AMP cyclohydrolase.